The sequence spans 374 residues: Queuine tRNA-ribosyltransferase (374 aa).

Aspartate 89 (proton acceptor) is an active-site residue. Substrate-binding positions include 89-93, aspartate 143, glutamine 187, and glycine 214; that span reads DSGGF. The interval 245 to 251 is RNA binding; sequence GVGKPED. Aspartate 264 acts as the Nucleophile in catalysis. Residues 269–273 are RNA binding; important for wobble base 34 recognition; that stretch reads TRNAR. Residues cysteine 302, cysteine 304, cysteine 307, and histidine 333 each contribute to the Zn(2+) site.

The protein belongs to the queuine tRNA-ribosyltransferase family. Homodimer. Within each dimer, one monomer is responsible for RNA recognition and catalysis, while the other monomer binds to the replacement base PreQ1. The cofactor is Zn(2+).

The enzyme catalyses 7-aminomethyl-7-carbaguanine + guanosine(34) in tRNA = 7-aminomethyl-7-carbaguanosine(34) in tRNA + guanine. It functions in the pathway tRNA modification; tRNA-queuosine biosynthesis. Its function is as follows. Catalyzes the base-exchange of a guanine (G) residue with the queuine precursor 7-aminomethyl-7-deazaguanine (PreQ1) at position 34 (anticodon wobble position) in tRNAs with GU(N) anticodons (tRNA-Asp, -Asn, -His and -Tyr). Catalysis occurs through a double-displacement mechanism. The nucleophile active site attacks the C1' of nucleotide 34 to detach the guanine base from the RNA, forming a covalent enzyme-RNA intermediate. The proton acceptor active site deprotonates the incoming PreQ1, allowing a nucleophilic attack on the C1' of the ribose to form the product. After dissociation, two additional enzymatic reactions on the tRNA convert PreQ1 to queuine (Q), resulting in the hypermodified nucleoside queuosine (7-(((4,5-cis-dihydroxy-2-cyclopenten-1-yl)amino)methyl)-7-deazaguanosine). This Yersinia pseudotuberculosis serotype O:1b (strain IP 31758) protein is Queuine tRNA-ribosyltransferase.